The primary structure comprises 132 residues: MKGMRSNIPRALNAGAQIACVDNTGAKVVEIISVKKYRGVKNRMPCAGIGDMCVVSVKKGTPEMRKQVLLAVVVRQKQEFRRPDGLHVSFEDNAMVITDEEGIPKGTDIKGPVAREVAERFPKIGTTASIIV.

Belongs to the universal ribosomal protein uL14 family. In terms of assembly, part of the 50S ribosomal subunit. Forms a cluster with proteins L3 and L24e, part of which may contact the 16S rRNA in 2 intersubunit bridges.

Functionally, binds to 23S rRNA. Forms part of two intersubunit bridges in the 70S ribosome. This Methanosarcina acetivorans (strain ATCC 35395 / DSM 2834 / JCM 12185 / C2A) protein is Large ribosomal subunit protein uL14.